We begin with the raw amino-acid sequence, 531 residues long: MNTKGIIAKLTAGALIANLLICPANTLAEKKTFTDVPNWAQQSVNYLMKKALDGKPDGTFSPSEKIDRGSAAKLMAMVLGLQINKQAKPSFQDAKNHWASPYIAAVEKAGVIYGDGSGNFNPSKDIDRASMASMLVEAYKLNNRIIGDLPTQFEDLKGHWGAKLANALVALGISKGTGDGWKPNGIVTRAEAVQFIAQTDMKKADTSKRMYMNRHFITYHQPSLSSGVTSNQHAPQIIVVKEQRADGWIKIVTNIGDKWTPLYEKRETIHSTFTTYPEASHSSKVLGTHSPQTVTVIEEKGSWIRIRTNAGFQWLDKNQLTLPKKQNNFLEGKTIIIDPGHGGIDGGHKGIYMNESPVVYDTAVRVQKLFAQKTPFTALLTRDAYSRPGKNATDSLGKRVEFAKKNKGDIFVSIHANGFNGNAHGTETFYYKAPTQKSNPYVNDSRILAEKIQKRLITALQTRDRGVKIGNLYVLRENTMPSVLTELGFVDNKADGKKLDSPEWRQRAAEAIYAGILDYYEWKGHNMSAYY.

A signal peptide spans Met-1–Ala-28. SLH domains follow at residues Glu-29 to Lys-85, Gln-86 to Leu-149, and Pro-150 to Met-210. The MurNAc-LAA domain maps to Ile-335–Leu-517.

The protein in the C-terminal section; belongs to the N-acetylmuramoyl-L-alanine amidase 3 family.

Its subcellular location is the secreted. It is found in the cell wall. It localises to the S-layer. This is an uncharacterized protein from Bacillus anthracis.